The chain runs to 319 residues: Acetyl-coenzyme A carboxylase carboxyl transferase subunit alpha (319 aa).

Residues 35–296 (NLDEEVQRLR…KAQLLDDLSE (262 aa)) form the CoA carboxyltransferase C-terminal domain.

It belongs to the AccA family. Acetyl-CoA carboxylase is a heterohexamer composed of biotin carboxyl carrier protein (AccB), biotin carboxylase (AccC) and two subunits each of ACCase subunit alpha (AccA) and ACCase subunit beta (AccD).

It localises to the cytoplasm. It catalyses the reaction N(6)-carboxybiotinyl-L-lysyl-[protein] + acetyl-CoA = N(6)-biotinyl-L-lysyl-[protein] + malonyl-CoA. It functions in the pathway lipid metabolism; malonyl-CoA biosynthesis; malonyl-CoA from acetyl-CoA: step 1/1. Its function is as follows. Component of the acetyl coenzyme A carboxylase (ACC) complex. First, biotin carboxylase catalyzes the carboxylation of biotin on its carrier protein (BCCP) and then the CO(2) group is transferred by the carboxyltransferase to acetyl-CoA to form malonyl-CoA. This is Acetyl-coenzyme A carboxylase carboxyl transferase subunit alpha from Sodalis glossinidius (strain morsitans).